We begin with the raw amino-acid sequence, 445 residues long: Phosphoglucosamine mutase (445 aa).

The active-site Phosphoserine intermediate is S102. Residues S102, D241, D243, and D245 each contribute to the Mg(2+) site. S102 carries the post-translational modification Phosphoserine.

It belongs to the phosphohexose mutase family. Mg(2+) serves as cofactor. In terms of processing, activated by phosphorylation.

It catalyses the reaction alpha-D-glucosamine 1-phosphate = D-glucosamine 6-phosphate. Catalyzes the conversion of glucosamine-6-phosphate to glucosamine-1-phosphate. In Klebsiella pneumoniae (strain 342), this protein is Phosphoglucosamine mutase.